The sequence spans 552 residues: Glycosyltransferase family 92 protein RCOM_0530710 (552 aa).

The chain crosses the membrane as a helical; Signal-anchor span at residues 12–34 (WNRFFWCTLLLVLSCVLFTASTF). One can recognise a GT92 domain in the interval 277–520 (KPHEMCICTM…GTRAVEPPDW (244 aa)).

It belongs to the glycosyltransferase 92 family.

Its subcellular location is the membrane. The chain is Glycosyltransferase family 92 protein RCOM_0530710 from Ricinus communis (Castor bean).